Reading from the N-terminus, the 210-residue chain is Putative 3-methyladenine DNA glycosylase (210 aa).

Belongs to the DNA glycosylase MPG family.

This Corynebacterium glutamicum (strain R) protein is Putative 3-methyladenine DNA glycosylase.